Consider the following 83-residue polypeptide: Small ribosomal subunit protein eS21 (83 aa).

The protein belongs to the eukaryotic ribosomal protein eS21 family. In terms of assembly, component of the 40S small ribosomal subunit. Interacts with sta.

The protein resides in the cytoplasm. Its subcellular location is the cytosol. It is found in the rough endoplasmic reticulum. In terms of biological role, may be an associated component of the ribosome rather than a core structural subunit. May act as a translation initiation factor. Has a role in regulation of cell proliferation in the hematopoietic organs and the imaginal disks of larva. The protein is Small ribosomal subunit protein eS21 (RpS21) of Drosophila simulans (Fruit fly).